The chain runs to 159 residues: uncharacterized protein (159 aa).

Residues Q4–F24 traverse the membrane as a helical segment.

It is found in the membrane. This is an uncharacterized protein from Acheta domesticus (House cricket).